Here is a 387-residue protein sequence, read N- to C-terminus: G2/mitotic-specific cyclin-B2 (387 aa).

This sequence belongs to the cyclin family. Cyclin AB subfamily. In terms of assembly, interacts with the CDK1 protein kinase to form a serine/threonine kinase holoenzyme complex also known as maturation promoting factor (MPF). The cyclin subunit imparts substrate specificity to the complex.

Essential for the control of the cell cycle at the G2/M (mitosis) transition. The protein is G2/mitotic-specific cyclin-B2 (ccnb2) of Oryzias latipes (Japanese rice fish).